A 109-amino-acid chain; its full sequence is Thioredoxin-like protein slr1139 (109 aa).

The region spanning 2–107 (SLLEITDAEF…LLELLKEELD (106 aa)) is the Thioredoxin domain. Cysteine 31 and cysteine 34 are oxidised to a cystine.

It belongs to the thioredoxin family.

The protein is Thioredoxin-like protein slr1139 of Synechocystis sp. (strain ATCC 27184 / PCC 6803 / Kazusa).